The sequence spans 483 residues: Glutamate mutase epsilon subunit (483 aa).

Arg66 lines the L-glutamate pocket. Position 68 (Gly68) interacts with adenosylcob(III)alamin. Arg100 is an L-glutamate binding site. Position 123 (Asn123) interacts with adenosylcob(III)alamin. L-glutamate-binding positions include 149-150 (RH), Glu171, and Tyr177. Pro180 contributes to the adenosylcob(III)alamin binding site. Tyr181 provides a ligand contact to L-glutamate. Adenosylcob(III)alamin is bound by residues Phe297, Lys326, Glu330, and Ile334.

It belongs to the methylaspartate mutase GlmE subunit family. As to quaternary structure, heterotetramer composed of 2 epsilon subunits (GlmE) and 2 sigma subunits (GlmS). GlmE exists as a homodimer and GlmS as a monomer. It depends on adenosylcob(III)alamin as a cofactor.

The enzyme catalyses (2S,3S)-3-methyl-L-aspartate = L-glutamate. It participates in amino-acid degradation; L-glutamate degradation via mesaconate pathway; acetate and pyruvate from L-glutamate: step 1/4. Its activity is regulated as follows. Competitively inhibited by (2S,4S)-4-fluoroglutamate, 2-methyleneglutarate, (2R,3RS)-3-fluoroglutamate and (S)-3-methylitaconate. Functionally, catalyzes the carbon skeleton rearrangement of L-glutamate to L-threo-3-methylaspartate ((2S,3S)-3-methylaspartate). The protein is Glutamate mutase epsilon subunit of Clostridium cochlearium.